An 817-amino-acid chain; its full sequence is Two pore calcium channel protein 1 (817 aa).

Residues 1-113 (MAVSLDDDVP…VHNHFFYMME (113 aa)) lie on the Cytoplasmic side of the membrane. The tract at residues 20-65 (SAPLPPSNSLGQEQLPSKNGGSHSIHNSQVPSLVSGADSPPSSPTG) is disordered. A compositionally biased stretch (polar residues) spans 26 to 51 (SNSLGQEQLPSKNGGSHSIHNSQVPS). Residues 114–134 (LLTALLLLLLSLCESPAVPVL) traverse the membrane as a helical segment. Topologically, residues 135–137 (KLH) are extracellular. A helical membrane pass occupies residues 138–158 (TYVHATLELFALMVVVFELCM). Topologically, residues 159–172 (KLRWLGFHTFVRHK) are cytoplasmic. Residues 173–193 (RTMVKTSVLVVQFIEAIVVLV) traverse the membrane as a helical segment. The Extracellular portion of the chain corresponds to 194-202 (RQTSHVRVT). A helical transmembrane segment spans residues 203 to 221 (RALRCIFLVDCRYCGGVRR). At 222–235 (NLRQIFQSLPPFMD) the chain is on the cytoplasmic side. Residues 236–256 (ILLLLLFFMIIFAILGFYLFS) form a helical membrane-spanning segment. Residues 257-263 (TNPSDPY) lie on the Extracellular side of the membrane. Positions 264–287 (FSTLENSIVNLFVLLTTANFPDVM) form an intramembrane region, helical; Pore-forming. Over 288 to 298 (MPSYSRNPWSC) the chain is Extracellular. The helical transmembrane segment at 299-319 (VFFIVYLSIELYFIMNLLLAV) threads the bilayer. Over 320-445 (VFDTFNDIEK…NILVNSKAFQ (126 aa)) the chain is Cytoplasmic. A helical membrane pass occupies residues 446–466 (YFMYLVVAVNGVWILVETFML). The Extracellular portion of the chain corresponds to 467-480 (KGGNFTSKHVPWSY). An N-linked (GlcNAc...) asparagine glycan is attached at asparagine 470. The helical transmembrane segment at 481-501 (LVFLTIYGVELFMKVAGLGPV) threads the bilayer. Over 502–504 (EYL) the chain is Cytoplasmic. The chain crosses the membrane as a helical span at residues 505 to 527 (SSGWNLFDFSVTAFAFLGLLALT). The Extracellular portion of the chain corresponds to 528–535 (LNMEPFYF). The helical transmembrane segment at 536 to 550 (IVVLRPLQLLRLFKL) threads the bilayer. Topologically, residues 551-569 (KKRYRNVLDTMFELLPRMA) are cytoplasmic. Residues 570-590 (SLGLTLLTFYYSFAIVGMEFF) traverse the membrane as a helical segment. The Extracellular segment spans residues 591–630 (NGRLTPNCCNTSTVADAYRFINHTVGNKTKVEEGYYYLNN). Positions 631 to 654 (FDNILNSFVTLFELTVVNNWYIIM) form an intramembrane region, helical; Pore-forming. Topologically, residues 655–671 (EGVTSQTSHWSRLYFMT) are extracellular. A helical membrane pass occupies residues 672–692 (FYIVTMVVMTIIVAFILEAFV). The Cytoplasmic portion of the chain corresponds to 693 to 817 (FRMNYSRKSQ…GSRQRSQTVT (125 aa)). A coiled-coil region spans residues 770–794 (SLKMYQEEIQEWYEEHAREQEQQKL). Residues 785–817 (HAREQEQQKLRGSVPGPAAQQPPGSRQRSQTVT) form a disordered region. Over residues 806–817 (PPGSRQRSQTVT) the composition is skewed to polar residues.

It belongs to the calcium channel alpha-1 subunit (TC 1.A.1.11) family. Two pore calcium channel subfamily. Dimer. Interacts with MTOR; the interaction is required for TPCN1 ATP sensitivity. Interacts with STX7, STX8 and STX12. Interacts with JPT2. Found in a complex with LSM12, TPCN1 and TPCN2. N-glycosylated. As to expression, mainly expressed in epithelial tissues like lung, kidney, colon, spleen and liver (at protein level).

Its subcellular location is the lysosome membrane. It localises to the endosome membrane. The protein resides in the early endosome membrane. The protein localises to the recycling endosome membrane. The enzyme catalyses Na(+)(in) = Na(+)(out). It carries out the reaction Ca(2+)(in) = Ca(2+)(out). With respect to regulation, na(+) current is inhibited by ATP in a MTORC-dependent manner. ATP sensitivity is independent of PI(3,5)P2. Probably regulated by Mg(2+) ions, cytosolic Mg(2+) selectively inhibits outward current while lysosomal Mg(2+) modestly inhibits both the outward and inward currents. In the absence of Mg(2+), NAADP readily activates TPCN2, with properties similar to PI(3,5)P2. Both current elicited by PI(3,5)P2 as well as NAADP are inhibited by tetrandrine. Its function is as follows. Intracellular channel initially characterized as a non-selective Ca(2+)-permeable channel activated by NAADP (nicotinic acid adenine dinucleotide phosphate), it is also a voltage-gated highly-selective Na(+) channel activated directly by PI(3,5)P2 (phosphatidylinositol 3,5-bisphosphate) that senses pH changes and confers electrical excitability to organelles. Localizes to the early and recycling endosomes membranes where it plays a role in the uptake and processing of proteins and regulates organellar membrane excitability, membrane trafficking and pH homeostasis. Ion selectivity is not fixed but rather agonist-dependent and under defined ionic conditions, can be readily activated by both NAADP and PI(3,5)P2. Required for mTOR-dependent nutrient sensing. The polypeptide is Two pore calcium channel protein 1 (Mus musculus (Mouse)).